The sequence spans 60 residues: Metallothionein (60 aa).

An N-acetylmethionine modification is found at Met-1. The interval Met-1–Cys-28 is beta. Positions 4, 6, 12, 14, 18, 20, 23, 25, 28, 32, 33, 35, 36, 40, 43, 47, 49, 54, 58, and 59 each coordinate a divalent metal cation. Positions Asn-29–Gln-60 are alpha.

It belongs to the metallothionein superfamily. Type 1 family.

Functionally, metallothioneins have a high content of cysteine residues that bind various heavy metals. In Pleuronectes platessa (European plaice), this protein is Metallothionein (mt).